The primary structure comprises 284 residues: Bifunctional protein FolD (284 aa).

NADP(+) contacts are provided by residues 166 to 168 (GAS) and Ile-232.

It belongs to the tetrahydrofolate dehydrogenase/cyclohydrolase family. In terms of assembly, homodimer.

The catalysed reaction is (6R)-5,10-methylene-5,6,7,8-tetrahydrofolate + NADP(+) = (6R)-5,10-methenyltetrahydrofolate + NADPH. It catalyses the reaction (6R)-5,10-methenyltetrahydrofolate + H2O = (6R)-10-formyltetrahydrofolate + H(+). It participates in one-carbon metabolism; tetrahydrofolate interconversion. Catalyzes the oxidation of 5,10-methylenetetrahydrofolate to 5,10-methenyltetrahydrofolate and then the hydrolysis of 5,10-methenyltetrahydrofolate to 10-formyltetrahydrofolate. The protein is Bifunctional protein FolD of Tolumonas auensis (strain DSM 9187 / NBRC 110442 / TA 4).